A 908-amino-acid chain; its full sequence is Collagen alpha-2(I) chain (908 aa).

Residues 1-36 are compositionally biased toward low complexity; that stretch reads GPMGIMGPRGPPGASGAPGPAGEPGEPGQTGPAGAR. 2 disordered regions span residues 1-211 and 227-908; these read GPMG…GITG and IPGP…PGPS. Over residues 45–59 the composition is skewed to basic and acidic residues; sequence AGEDGHPGKPGRPGE. Low complexity-rich tracts occupy residues 129 to 158, 183 to 197, 234 to 249, 293 to 309, 403 to 418, 465 to 474, 526 to 542, and 569 to 589; these read VGAPGPAGARGSDGSVGPVGPAGPIGSAGP, AGPRGEVGIPGVSGP, PGPVGAAGATGARGIV, STGPTGPPGIRGSRGIP, AGIAGARGPAGPPGFQ, PAGPIGSRGP, RRGAPGAIGAPGPAGAN, and VGPAGPNGFAGPAGAAGQPGA. The span at 590-599 shows a compositional bias: basic and acidic residues; sequence KGERGTKGPK. Over residues 602–617 the composition is skewed to low complexity; sequence NGPVGPTGPVGAAGPA. A compositionally biased stretch (gly residues) spans 627 to 636; it reads GSRGDGGPPG. 4 stretches are compositionally biased toward low complexity: residues 637 to 647, 701 to 730, 745 to 775, and 785 to 805; these read ATGFPGAAGRT, AGEPGTAGIPGTPGPQGIIGAPGIIGIPGS, EPGPIGIAGPPGARGPPGAVGNPGVNGAPGE, and PGPAGSVGPAGAVGPRGPSGP. The span at 809–820 shows a compositional bias: basic and acidic residues; that stretch reads RGDKGEPGDKGP. A compositionally biased stretch (pro residues) spans 893–908; the sequence is AGPPGPPGPPGPPGPS.

The protein belongs to the fibrillar collagen family. In terms of assembly, trimers of one alpha 2(I) and two alpha 1(I) chains. Interacts (via C-terminus) with TMEM131 (via PapD-L domain); the interaction is direct and is involved in assembly and TRAPPIII ER-to-Golgi transport complex-dependent secretion of collagen. Prolines at the third position of the tripeptide repeating unit (G-X-Y) are hydroxylated in some or all of the chains. As to expression, forms the fibrils of tendon, ligaments and bones. In bones, the fibrils are mineralized with calcium hydroxyapatite.

Its subcellular location is the secreted. It is found in the extracellular space. The protein localises to the extracellular matrix. In terms of biological role, type I collagen is a member of group I collagen (fibrillar forming collagen). This is Collagen alpha-2(I) chain from Toxodon sp.